Consider the following 187-residue polypeptide: Signal peptidase I U (187 aa).

The Cytoplasmic portion of the chain corresponds to 1-16 (MNAKTITLKKKRKIKT). A helical membrane pass occupies residues 17 to 37 (IVVLSIIMIAALIFTIRLVFY). The Extracellular portion of the chain corresponds to 38–187 (KPFLIEGSSM…YPFGEMRQAK (150 aa)). Active-site residues include Ser46 and Lys88.

It belongs to the peptidase S26 family.

It is found in the cell membrane. It catalyses the reaction Cleavage of hydrophobic, N-terminal signal or leader sequences from secreted and periplasmic proteins.. This chain is Signal peptidase I U (sipU), found in Bacillus subtilis (strain 168).